We begin with the raw amino-acid sequence, 397 residues long: Acetate kinase (397 aa).

N7 contacts Mg(2+). K14 is an ATP binding site. A substrate-binding site is contributed by R90. Catalysis depends on D147, which acts as the Proton donor/acceptor. ATP-binding positions include 207–211 (HLGNG), 282–284 (DFR), and 330–334 (GLGEN). Residue E383 participates in Mg(2+) binding.

This sequence belongs to the acetokinase family. Homodimer. Requires Mg(2+) as cofactor. Mn(2+) is required as a cofactor.

It localises to the cytoplasm. The enzyme catalyses acetate + ATP = acetyl phosphate + ADP. It functions in the pathway metabolic intermediate biosynthesis; acetyl-CoA biosynthesis; acetyl-CoA from acetate: step 1/2. Functionally, catalyzes the formation of acetyl phosphate from acetate and ATP. Can also catalyze the reverse reaction. The chain is Acetate kinase from Clostridium botulinum (strain Langeland / NCTC 10281 / Type F).